We begin with the raw amino-acid sequence, 372 residues long: Coxsackievirus and adenovirus receptor homolog (372 aa).

The first 22 residues, 1–22 (MDMRTSFLCVTYVILLTGSACG), serve as a signal peptide directing secretion. 2 consecutive Ig-like C2-type domains span residues 23-140 (LQIT…YLLT) and 130-234 (PGIA…VTIT). Residues 23-241 (LQITSTGQTS…TITQPPNTAG (219 aa)) lie on the Extracellular side of the membrane. 3 disulfide bridges follow: Cys45/Cys124, Cys150/Cys227, and Cys166/Cys216. The N-linked (GlcNAc...) asparagine glycan is linked to Asn205. A helical transmembrane segment spans residues 242 to 262 (IIAGVIICILLLLILLALILF). Over 263 to 372 (CCCRARHKKK…PAQNKDGSIV (110 aa)) the chain is Cytoplasmic. The disordered stretch occupies residues 286–352 (PPPKSRVSTA…PPSRMAGPNL (67 aa)). Residues 291–317 (RVSTARSFTSVGSQRSSLGSMSPSNLH) show a composition bias toward polar residues. Over residues 318–336 (EYSKPQYDKIPSEEYDRPP) the composition is skewed to basic and acidic residues.

As to quaternary structure, monomer. Probably homodimer formed by 2 molecules on adjacent cells.

It localises to the cell membrane. The protein localises to the basolateral cell membrane. The protein resides in the cell junction. It is found in the tight junction. Its subcellular location is the adherens junction. May function as a homophilic cell adhesion molecule and be essential for tight junction integrity. May also be involved in transepithelial migration of leukocytes through adhesive interactions with jaml. The interaction between both receptors may also mediate the activation of gamma-delta T-cells, a subpopulation of T-cells residing in epithelia and involved in tissue homeostasis and repair. This is Coxsackievirus and adenovirus receptor homolog (cxadr) from Danio rerio (Zebrafish).